The chain runs to 247 residues: 7-cyano-7-deazaguanine synthase (247 aa).

An ATP-binding site is contributed by 21 to 31 (FSGGQDSTACL). 4 residues coordinate Zn(2+): cysteine 209, cysteine 224, cysteine 227, and cysteine 230.

This sequence belongs to the QueC family. Zn(2+) is required as a cofactor.

The catalysed reaction is 7-carboxy-7-deazaguanine + NH4(+) + ATP = 7-cyano-7-deazaguanine + ADP + phosphate + H2O + H(+). Its pathway is purine metabolism; 7-cyano-7-deazaguanine biosynthesis. Its function is as follows. Catalyzes the ATP-dependent conversion of 7-carboxy-7-deazaguanine (CDG) to 7-cyano-7-deazaguanine (preQ(0)). This is 7-cyano-7-deazaguanine synthase from Halorhodospira halophila (strain DSM 244 / SL1) (Ectothiorhodospira halophila (strain DSM 244 / SL1)).